The sequence spans 79 residues: ATP synthase subunit c (79 aa).

2 consecutive transmembrane segments (helical) span residues 7 to 27 (VSGM…GAGI) and 56 to 76 (IGSA…LFLI).

Belongs to the ATPase C chain family. F-type ATPases have 2 components, F(1) - the catalytic core - and F(0) - the membrane proton channel. F(1) has five subunits: alpha(3), beta(3), gamma(1), delta(1), epsilon(1). F(0) has three main subunits: a(1), b(2) and c(10-14). The alpha and beta chains form an alternating ring which encloses part of the gamma chain. F(1) is attached to F(0) by a central stalk formed by the gamma and epsilon chains, while a peripheral stalk is formed by the delta and b chains.

It localises to the cell membrane. In terms of biological role, f(1)F(0) ATP synthase produces ATP from ADP in the presence of a proton or sodium gradient. F-type ATPases consist of two structural domains, F(1) containing the extramembraneous catalytic core and F(0) containing the membrane proton channel, linked together by a central stalk and a peripheral stalk. During catalysis, ATP synthesis in the catalytic domain of F(1) is coupled via a rotary mechanism of the central stalk subunits to proton translocation. Its function is as follows. Key component of the F(0) channel; it plays a direct role in translocation across the membrane. A homomeric c-ring of between 10-14 subunits forms the central stalk rotor element with the F(1) delta and epsilon subunits. The protein is ATP synthase subunit c of Clostridium botulinum (strain Hall / ATCC 3502 / NCTC 13319 / Type A).